Reading from the N-terminus, the 492-residue chain is GTPase-activating protein MSB4 (492 aa).

One can recognise a Rab-GAP TBC domain in the interval 147 to 367; the sequence is GIPAEWRGNA…RIWDCLFYEE (221 aa).

It is found in the cytoplasm. The protein localises to the bud. It localises to the bud neck. Its function is as follows. Regulates exocytosis by functioning as a GAP for SEC4. Also required for efficient polarization of the actin patches. The polypeptide is GTPase-activating protein MSB4 (MSB4) (Saccharomyces cerevisiae (strain ATCC 204508 / S288c) (Baker's yeast)).